Reading from the N-terminus, the 114-residue chain is Hydrogenase maturation factor HypA (114 aa).

A Ni(2+)-binding site is contributed by His-2. The Zn(2+) site is built by Cys-73, Cys-76, Cys-89, and Cys-92.

It belongs to the HypA/HybF family.

Functionally, involved in the maturation of [NiFe] hydrogenases. Required for nickel insertion into the metal center of the hydrogenase. The protein is Hydrogenase maturation factor HypA of Azoarcus sp. (strain BH72).